We begin with the raw amino-acid sequence, 168 residues long: uncharacterized protein (168 aa).

A signal peptide spans 1–21 (MVYEVLAVVSGGLLGFGVTWA).

This is an uncharacterized protein from Archaeoglobus fulgidus (strain ATCC 49558 / DSM 4304 / JCM 9628 / NBRC 100126 / VC-16).